The chain runs to 220 residues: GTP cyclohydrolase 1 (220 aa).

Zn(2+) is bound by residues cysteine 109, histidine 112, and cysteine 180.

The protein belongs to the GTP cyclohydrolase I family. Toroid-shaped homodecamer, composed of two pentamers of five dimers.

The catalysed reaction is GTP + H2O = 7,8-dihydroneopterin 3'-triphosphate + formate + H(+). It participates in cofactor biosynthesis; 7,8-dihydroneopterin triphosphate biosynthesis; 7,8-dihydroneopterin triphosphate from GTP: step 1/1. This is GTP cyclohydrolase 1 from Yersinia enterocolitica serotype O:8 / biotype 1B (strain NCTC 13174 / 8081).